Here is a 227-residue protein sequence, read N- to C-terminus: uncharacterized protein (227 aa).

3 helical membrane-spanning segments follow: residues 109–128, 173–192, and 199–221; these read MCNV…FAGI, AILL…ILLT, and ALRV…VMMG.

Its subcellular location is the cell membrane. This is an uncharacterized protein from Archaeoglobus fulgidus (strain ATCC 49558 / DSM 4304 / JCM 9628 / NBRC 100126 / VC-16).